A 926-amino-acid chain; its full sequence is MLSKIIGSVVGTKNERELKRMRKVVSKINAYEAAIQALSDEQLQQKTEEFKARHQGGESLDALLPEAFAICREASLRVNGMRHYDVQLIGGITLHEGKIAEMKTGEGKTLMGTLAMYLNAISGKGVHLVTVNDYLAARDAELNRPLFGFLGMTVGVIYSQQPPQEKVDAYQADITYGTNNEYGFDYLRDNMVFSLKEKKQRPLNFCIIDEIDSILIDEARTPLIISGQAEDSSRMYALINTIIPVLIRSKDEEANKNNEEEDFWIDEKNRQIEISEKGYEKIERFLIQVGELGENESLYSPSRLPLLAHVQAAIRAHHVFVKNIHYIVDDGEVVIVDENTGRTMPGRRWSEGLHQAVEAKENVEIQAENQTLATTTFQNFFRLYDKLSGMTGTADTEAAEFKSTYDLDVIVIPTHEPIARVDMDDQIFLTKLGKYKGIIREIQEIQAKGAPVLVGTATIEASEELSYLLDQEGVKHNVLNAKQHEREAEIIAQAGSPKSVTIATNMAGRGTDIILGGNWQSFIEDIDAVSPEEMARLKAQWQIKHDQVVAAGGLHIIGSERHESRRIDNQLRGRAGRQGDPGMSRFFLSLEDDLMRIFAGDRVVNMMRAMGLKEDEAIEHKMVSKSIENAQGKVESRDFDARKNLLKYDDVANDQRKVIYGQRDDLLAEMDLLEAIKIMHQEVYNAMINQFIPPGSIDDQWNVDGLEDELENEFKIAMPINDWLDEDRRLDEEGLRAKIIETALDRYHSRREQMGEKDAAQLERHFMLQSLDKHWKEHLTQMDQLRKGIHLRGYAQKNPEQEYKRESFELFQMMLGAIKSETVQDLSRVHIPTKEELEALEIQQRENAAHMQMQFEHSDIDNMDGGVERAAVQSRNVVGGATGASVAGAMAGSSDDADPYAGMNISRNAPCPCGSALKYKQCHGKI.

ATP-binding positions include Gln-87, Gly-105 to Thr-109, and Asp-512. Residues Cys-911, Cys-913, Cys-922, and His-923 each coordinate Zn(2+).

Belongs to the SecA family. As to quaternary structure, monomer and homodimer. Part of the essential Sec protein translocation apparatus which comprises SecA, SecYEG and auxiliary proteins SecDF-YajC and YidC. Requires Zn(2+) as cofactor.

The protein resides in the cell inner membrane. It is found in the cytoplasm. The enzyme catalyses ATP + H2O + cellular proteinSide 1 = ADP + phosphate + cellular proteinSide 2.. Its function is as follows. Part of the Sec protein translocase complex. Interacts with the SecYEG preprotein conducting channel. Has a central role in coupling the hydrolysis of ATP to the transfer of proteins into and across the cell membrane, serving both as a receptor for the preprotein-SecB complex and as an ATP-driven molecular motor driving the stepwise translocation of polypeptide chains across the membrane. The protein is Protein translocase subunit SecA of Psychrobacter cryohalolentis (strain ATCC BAA-1226 / DSM 17306 / VKM B-2378 / K5).